Reading from the N-terminus, the 165-residue chain is Large ribosomal subunit protein uL15 (165 aa).

Residues 1–44 (MSLNQLKAPRGANRAKKRVGRGQGSGLGKTAGRGGKGQKARSGN) are disordered. Over residues 21–37 (RGQGSGLGKTAGRGGKG) the composition is skewed to gly residues.

Belongs to the universal ribosomal protein uL15 family. In terms of assembly, part of the 50S ribosomal subunit.

Functionally, binds to the 23S rRNA. The sequence is that of Large ribosomal subunit protein uL15 from Anaeromyxobacter dehalogenans (strain 2CP-C).